A 393-amino-acid polypeptide reads, in one-letter code: NAD(P)H-quinone oxidoreductase subunit H, chloroplastic (393 aa).

This sequence belongs to the complex I 49 kDa subunit family. In terms of assembly, NDH is composed of at least 16 different subunits, 5 of which are encoded in the nucleus.

The protein resides in the plastid. It localises to the chloroplast thylakoid membrane. The catalysed reaction is a plastoquinone + NADH + (n+1) H(+)(in) = a plastoquinol + NAD(+) + n H(+)(out). The enzyme catalyses a plastoquinone + NADPH + (n+1) H(+)(in) = a plastoquinol + NADP(+) + n H(+)(out). NDH shuttles electrons from NAD(P)H:plastoquinone, via FMN and iron-sulfur (Fe-S) centers, to quinones in the photosynthetic chain and possibly in a chloroplast respiratory chain. The immediate electron acceptor for the enzyme in this species is believed to be plastoquinone. Couples the redox reaction to proton translocation, and thus conserves the redox energy in a proton gradient. This chain is NAD(P)H-quinone oxidoreductase subunit H, chloroplastic, found in Oenothera argillicola (Appalachian evening primrose).